An 88-amino-acid chain; its full sequence is MALKERIGTVVSDKMDKTVVVAVINRYPHPTYKKIVSKTTRYKAHDPENSCVLGDRVKIKETRPLSAHKRWAIEEILNKTIMSKEDKK.

The protein belongs to the universal ribosomal protein uS17 family. Part of the 30S ribosomal subunit.

Functionally, one of the primary rRNA binding proteins, it binds specifically to the 5'-end of 16S ribosomal RNA. This Prochlorococcus marinus subsp. pastoris (strain CCMP1986 / NIES-2087 / MED4) protein is Small ribosomal subunit protein uS17.